The sequence spans 898 residues: Interleukin enhancer-binding factor 3 (898 aa).

Residues 5-378 (RIFVNDDRHV…PMKRPMEEDG (374 aa)) form the DZF domain. The disordered stretch occupies residues 52-85 (QEKGNSELSEAENMDTPPDDESKEGAGEQKAEHM). Over residues 60 to 73 (SEAENMDTPPDDES) the composition is skewed to acidic residues. Threonine 67 carries the post-translational modification Phosphothreonine. A compositionally biased stretch (basic and acidic residues) spans 74-85 (KEGAGEQKAEHM). Lysine 100 carries the N6-acetyllysine modification. Threonine 188 carries the phosphothreonine; by PKR modification. A Phosphoserine modification is found at serine 190. Lysine 297 participates in a covalent cross-link: Glycyl lysine isopeptide (Lys-Gly) (interchain with G-Cter in ubiquitin). Position 315 is a phosphothreonine; by PKR (threonine 315). A Glycyl lysine isopeptide (Lys-Gly) (interchain with G-Cter in SUMO1) cross-link involves residue lysine 348. A disordered region spans residues 363–402 (TTYAITPMKRPMEEDGEEKSPSKKKKKIQKKEEKADPPQA). The Bipartite nuclear localization signal motif lies at 371–389 (KRPMEEDGEEKSPSKKKKK). Over residues 372–383 (RPMEEDGEEKSP) the composition is skewed to basic and acidic residues. Phosphoserine occurs at positions 382 and 384. Lysine 396 participates in a covalent cross-link: Glycyl lysine isopeptide (Lys-Gly) (interchain with G-Cter in SUMO2). One can recognise a DRBM 1 domain in the interval 398–467 (DPPQAMNALM…AVKVLQDMGL (70 aa)). Residue lysine 460 is modified to N6-acetyllysine. 2 disordered regions span residues 466–495 (GLPT…IVAP) and 505–524 (PSSV…LTKH). Over residues 472–481 (EGRDSSKGED) the composition is skewed to basic and acidic residues. A phosphoserine mark is found at serine 476, serine 477, serine 482, and serine 486. Lysine 489 participates in a covalent cross-link: Glycyl lysine isopeptide (Lys-Gly) (interchain with G-Cter in SUMO2). The DRBM 2 domain occupies 524–590 (HGKNPVMELN…ALAALEKLFP (67 aa)). Position 592 is a phosphothreonine (threonine 592). The interval 609 to 898 (RGGPKFAAKP…TEHSMNYQYR (290 aa)) is interaction with PRMT1. 2 disordered regions span residues 631–661 (NEVP…GGAN) and 719–898 (QGDS…YQYR). A compositionally biased stretch (gly residues) spans 644–661 (RGGNIRGRGRGRGFGGAN). Low complexity-rich tracts occupy residues 745 to 769 (SYSS…SSYG), 783 to 794 (GSYSSYSNSYNS), and 802 to 812 (DYSYDSKFNYS). 4 positions are modified to phosphoserine: serine 794, serine 812, serine 814, and serine 818. The segment covering 813-822 (GSGGRSGGNS) has biased composition (gly residues). Low complexity predominate over residues 823-834 (YGSSGSSSYNTG). Positions 835–845 (SHGGYGTGSGG) are enriched in gly residues. A compositionally biased stretch (low complexity) spans 846-886 (SSSYQGKQGGYSSQSNYSSPGSSQSYSGPASSYQSSQGGYS).

Identified in a IGF2BP1-dependent mRNP granule complex containing untranslated mRNAs. Interacts with FUS and SMN. Interacts (via C-terminus) with PRMT1. Forms a complex with ILF2. Can also bind to PRKDC/XRCC7: this may stabilize the interaction of PRKDC/XRCC7 and the heterodimeric complex of XRCC6/KU70 and XRCC5/KU80. Forms a heteromeric complex with ZNF346 and ILF3. Found in a nuclear export complex with XPO5, ILF3, Ran and double-stranded RNA or double-stranded minihelix VA1 RNA. Found in a nuclear export complex with XPO5, RAN, ILF3, ZNF346 and double-stranded RNA. Interacts with XPO5 and ZNF346. Forms a complex with ILF2, YLPM1, KHDRBS1, RBMX, NCOA5 and PPP1CA. Interacts with AGO1 and AGO2. Interacts with DHX36; this interaction occurs in a RNA-dependent manner. Interacts with ELAVL1; this interaction occurs in a RNA-dependent manner. Interacts with HAVCR2; this interaction promotes ILF3 ubiquitination and subsequent degradation. Post-translationally, phosphorylated at Thr-188 and Thr-315 by PKR in response to RNA viruses. This phosphorylation results in the dissociation of ILF2 from the ILF2-ILF3 complex resulting in a cytoplasmic sequestration of ILF3 where it can bind to viral RNAs and impede viral replication. In terms of processing, methylated by protein arginine N-methyltransferase 1. In terms of tissue distribution, ubiquitous. Expressed at high levels in the thymus, testis, ovary and at lower levelss in the spleen.

It is found in the nucleus. The protein resides in the nucleolus. The protein localises to the cytoplasm. RNA-binding protein that plays an essential role in the biogenesis of circular RNAs (circRNAs) which are produced by back-splicing circularization of pre-mRNAs. Within the nucleus, promotes circRNAs processing by stabilizing the regulatory elements residing in the flanking introns of the circularized exons. Plays thereby a role in the back-splicing of a subset of circRNAs. As a consequence, participates in a wide range of transcriptional and post-transcriptional processes. Binds to poly-U elements and AU-rich elements (AREs) in the 3'-UTR of target mRNAs. Upon viral infection, ILF3 accumulates in the cytoplasm and participates in the innate antiviral response. Mechanistically, ILF3 becomes phosphorylated and activated by the double-stranded RNA-activated protein kinase/PKR which releases ILF3 from cellular mature circRNAs. In turn, unbound ILF3 molecules are able to interact with and thus inhibit viral mRNAs. The polypeptide is Interleukin enhancer-binding factor 3 (Ilf3) (Mus musculus (Mouse)).